The following is a 155-amino-acid chain: MIKTRLARGGFSHRFIIKNMRYPVTLEPVEEGGYFVSFPDIPEALTQGDTREEALEMALDALITAFEFYFEDNEKIPLPGPVGQDYVDVPLSVASKVLMLNAFLDSKLTQIELANRMGVKKQEVTRIFDLRHSTKIDTVGKVASAIGHQLTLSIE.

The HTH cro/C1-type domain occupies 99–153 (MLNAFLDSKLTQIELANRMGVKKQEVTRIFDLRHSTKIDTVGKVASAIGHQLTLS). Positions 110–129 (QIELANRMGVKKQEVTRIFD) form a DNA-binding region, H-T-H motif.

It belongs to the HicB antitoxin family. As to quaternary structure, probably forms a complex with the probable mRNA interferase HicA1 (its cognate toxin); when complexed with HicA 1 inhibits the toxin activity.

In terms of biological role, antitoxin component of a type II toxin-antitoxin (TA) system. Functions as an mRNA interferase antitoxin preventing effects of the HicA 1 toxin. In Photorhabdus laumondii subsp. laumondii (strain DSM 15139 / CIP 105565 / TT01) (Photorhabdus luminescens subsp. laumondii), this protein is Antitoxin HicB 1 (hicB1).